We begin with the raw amino-acid sequence, 477 residues long: Homospermidine synthase (477 aa).

It belongs to the saccharopine dehydrogenase family. Homodimer. The cofactor is NAD(+).

It catalyses the reaction 2 putrescine = sym-homospermidine + NH4(+). It carries out the reaction putrescine + spermidine = sym-homospermidine + propane-1,3-diamine. Its function is as follows. Involved in the NAD(+)-dependent synthesis of the polyamine homospermidine from putrescine. The sequence is that of Homospermidine synthase (hss) from Blastochloris viridis (Rhodopseudomonas viridis).